Here is a 146-residue protein sequence, read N- to C-terminus: UPF0260 protein Swit_2819 (146 aa).

The protein belongs to the UPF0260 family.

This is UPF0260 protein Swit_2819 from Rhizorhabdus wittichii (strain DSM 6014 / CCUG 31198 / JCM 15750 / NBRC 105917 / EY 4224 / RW1) (Sphingomonas wittichii).